The chain runs to 132 residues: Translation initiation factor 5A (132 aa).

At lysine 36 the chain carries Hypusine.

This sequence belongs to the eIF-5A family.

Its subcellular location is the cytoplasm. Its function is as follows. Functions by promoting the formation of the first peptide bond. This Pyrobaculum arsenaticum (strain DSM 13514 / JCM 11321 / PZ6) protein is Translation initiation factor 5A (eIF5A).